We begin with the raw amino-acid sequence, 407 residues long: Methylthioribose kinase (407 aa).

ATP-binding positions include asparagine 40, lysine 57, and 111 to 113 (EDL). Aspartate 229 contacts substrate. Residue 246 to 248 (DAE) coordinates ATP. Arginine 344 is a substrate binding site.

It belongs to the methylthioribose kinase family. Homodimer.

It catalyses the reaction 5-(methylsulfanyl)-D-ribose + ATP = 5-(methylsulfanyl)-alpha-D-ribose 1-phosphate + ADP + H(+). Its pathway is amino-acid biosynthesis; L-methionine biosynthesis via salvage pathway; S-methyl-5-thio-alpha-D-ribose 1-phosphate from S-methyl-5'-thioadenosine (hydrolase route): step 2/2. In terms of biological role, catalyzes the phosphorylation of methylthioribose into methylthioribose-1-phosphate. The chain is Methylthioribose kinase from Yersinia pestis bv. Antiqua (strain Angola).